The sequence spans 272 residues: NH(3)-dependent NAD(+) synthetase (272 aa).

45–52 (GISGGQDS) lines the ATP pocket. Aspartate 51 contributes to the Mg(2+) binding site. Residue arginine 138 coordinates deamido-NAD(+). Threonine 158 contacts ATP. Glutamate 163 lines the Mg(2+) pocket. Residues lysine 171 and aspartate 178 each contribute to the deamido-NAD(+) site. ATP contacts are provided by lysine 187 and threonine 209. 258-259 (HK) is a deamido-NAD(+) binding site.

Belongs to the NAD synthetase family. As to quaternary structure, homodimer.

The enzyme catalyses deamido-NAD(+) + NH4(+) + ATP = AMP + diphosphate + NAD(+) + H(+). It functions in the pathway cofactor biosynthesis; NAD(+) biosynthesis; NAD(+) from deamido-NAD(+) (ammonia route): step 1/1. Catalyzes the ATP-dependent amidation of deamido-NAD to form NAD. Uses ammonia as a nitrogen source. This chain is NH(3)-dependent NAD(+) synthetase, found in Bacillus cereus (strain G9842).